Consider the following 192-residue polypeptide: MAREREGRRRDDREERDSEFVDKLVHINRVAKVVKGGRRFGFAALVVVGDQKGRVGFGHGKAREVPEAIRKATEAAKRGLIRVSLREGRTLHHDVNGRHGAGKVILRAAPQGTGIIAGGPMRAVFETLGMQDVVAKSLGSSNPYNLVRATFDALKNEDSPRSVAARRGLKVSALQARRRDADPADTSEAAVA.

The 64-residue stretch at 20–83 folds into the S5 DRBM domain; it reads FVDKLVHINR…EAAKRGLIRV (64 aa). Residues 162–192 are disordered; it reads SVAARRGLKVSALQARRRDADPADTSEAAVA.

It belongs to the universal ribosomal protein uS5 family. As to quaternary structure, part of the 30S ribosomal subunit. Contacts proteins S4 and S8.

Its function is as follows. With S4 and S12 plays an important role in translational accuracy. Located at the back of the 30S subunit body where it stabilizes the conformation of the head with respect to the body. This chain is Small ribosomal subunit protein uS5, found in Methylorubrum extorquens (strain CM4 / NCIMB 13688) (Methylobacterium extorquens).